The primary structure comprises 335 residues: Fimbrial adhesin PapGI (335 aa).

The first 21 residues, 1–21 (MKKWFPAFLFLSLSGGNDALA), serve as a signal peptide directing secretion.

Belongs to the adhesin PapG family. In terms of assembly, interacts with chaperone PapD. Assembly of the P pilus requires periplasmic chaperone PapD, in absence of the chaperone overexpression of this subunit is toxic, where the protein accumulates in the periplasm. PapD stimulates release of PapG from an inner membrane-associated form (where at least 1 disulfide bond can form) into the periplasm and also helps it achieve its correct digalactoside-binding conformation. In terms of processing, contains disulfide bonds.

It is found in the secreted. It localises to the fimbrium. In terms of biological role, tip adhesin component of type P pili that binds preferentially to host cell glycosphingolipids such as globotriaosylceramide. The protein is Fimbrial adhesin PapGI of Escherichia coli.